The following is a 133-amino-acid chain: S-protein homolog 21 (133 aa).

The signal sequence occupies residues 1–21 (MKNLSIFLFVVGLCMISDVYG).

This sequence belongs to the plant self-incompatibility (S1) protein family.

The protein localises to the secreted. This is S-protein homolog 21 from Arabidopsis thaliana (Mouse-ear cress).